The sequence spans 127 residues: MORF4 family-associated protein 1 (127 aa).

A coiled-coil region spans residues 92–126 (RAAKRCEKAEEKAKEIAKMAEMLVELVRRIEKSES).

This sequence belongs to the MORF4 family-associated protein family. In terms of assembly, found in a complex composed of MORF4L1, MRFAP1 and RB1. Interacts via its N-terminus with MORF4L1. Interacts with CSTB and MORF4L2.

The protein resides in the nucleus. The protein localises to the cytoplasm. Its subcellular location is the perinuclear region. This is MORF4 family-associated protein 1 from Homo sapiens (Human).